The chain runs to 255 residues: Proteasome subunit alpha (255 aa).

Positions 228–255 (LLASPAGTSGPTGEPGPAGTAATDGGDL) are disordered. Low complexity predominate over residues 232–255 (PAGTSGPTGEPGPAGTAATDGGDL).

The protein belongs to the peptidase T1A family. As to quaternary structure, the 20S proteasome core is composed of 14 alpha and 14 beta subunits that assemble into four stacked heptameric rings, resulting in a barrel-shaped structure. The two inner rings, each composed of seven catalytic beta subunits, are sandwiched by two outer rings, each composed of seven alpha subunits. The catalytic chamber with the active sites is on the inside of the barrel. Has a gated structure, the ends of the cylinder being occluded by the N-termini of the alpha-subunits. Is capped by the proteasome-associated ATPase, ARC.

The protein resides in the cytoplasm. It participates in protein degradation; proteasomal Pup-dependent pathway. Its activity is regulated as follows. The formation of the proteasomal ATPase ARC-20S proteasome complex, likely via the docking of the C-termini of ARC into the intersubunit pockets in the alpha-rings, may trigger opening of the gate for substrate entry. Interconversion between the open-gate and close-gate conformations leads to a dynamic regulation of the 20S proteasome proteolysis activity. Its function is as follows. Component of the proteasome core, a large protease complex with broad specificity involved in protein degradation. This is Proteasome subunit alpha from Sanguibacter keddieii (strain ATCC 51767 / DSM 10542 / NCFB 3025 / ST-74).